A 569-amino-acid polypeptide reads, in one-letter code: Oxygen-dependent choline dehydrogenase (569 aa).

9-38 (DYVIIGGGSAGSVLGNRLSEDKDKEVLVLE) is a binding site for FAD. Residue H475 is the Proton acceptor of the active site.

This sequence belongs to the GMC oxidoreductase family. It depends on FAD as a cofactor.

It carries out the reaction choline + A = betaine aldehyde + AH2. The catalysed reaction is betaine aldehyde + NAD(+) + H2O = glycine betaine + NADH + 2 H(+). It participates in amine and polyamine biosynthesis; betaine biosynthesis via choline pathway; betaine aldehyde from choline (cytochrome c reductase route): step 1/1. Functionally, involved in the biosynthesis of the osmoprotectant glycine betaine. Catalyzes the oxidation of choline to betaine aldehyde and betaine aldehyde to glycine betaine at the same rate. The sequence is that of Oxygen-dependent choline dehydrogenase from Staphylococcus aureus (strain COL).